Consider the following 507-residue polypeptide: Histidine--tRNA ligase (507 aa).

This sequence belongs to the class-II aminoacyl-tRNA synthetase family. In terms of assembly, homodimer.

It is found in the cytoplasm. The enzyme catalyses tRNA(His) + L-histidine + ATP = L-histidyl-tRNA(His) + AMP + diphosphate + H(+). The chain is Histidine--tRNA ligase from Rhizobium leguminosarum bv. trifolii (strain WSM2304).